A 106-amino-acid chain; its full sequence is Minor capsid protein VP2 (106 aa).

It belongs to the vesivirus VP2 protein family. As to quaternary structure, homooligomer. The portal-like structure consists in 12 copies of VP2. Interacts with capsid protein VP1.

Its subcellular location is the virion. It is found in the host cytoplasm. Its function is as follows. Minor structural protein that forms a portal-like structure at a unique three-fold axis of symmetry, following binding to the host receptor. The virion attaches to feline junctional adhesion molecule A (F11R). Once attached, the virion is endocytosed. Acidification of the endosome induces conformational change of capsid protein thereby injecting virus genomic RNA into host cytoplasm. The channel formed by VP2 may allow the delivery of the viral genome through the host endosomal membrane. The sequence is that of Minor capsid protein VP2 from Feline calicivirus (strain CFI/68 FIV) (FCV).